The primary structure comprises 301 residues: Probable alpha-L-glutamate ligase 1 (301 aa).

Positions 104–287 (LQLLSRKGIG…VTEPIVEYIE (184 aa)) constitute an ATP-grasp domain. Residues Lys-141, 178 to 179 (EY), Asp-187, and 211 to 213 (RSN) contribute to the ATP site. The Mg(2+) site is built by Asp-248, Glu-260, and Asn-262. The Mn(2+) site is built by Asp-248, Glu-260, and Asn-262.

It belongs to the RimK family. It depends on Mg(2+) as a cofactor. Mn(2+) serves as cofactor.

This is Probable alpha-L-glutamate ligase 1 from Shewanella sp. (strain ANA-3).